Consider the following 199-residue polypeptide: 7-methyl-GTP pyrophosphatase (199 aa).

The active-site Proton acceptor is the aspartate 76.

It belongs to the Maf family. YceF subfamily. A divalent metal cation serves as cofactor.

Its subcellular location is the cytoplasm. The catalysed reaction is N(7)-methyl-GTP + H2O = N(7)-methyl-GMP + diphosphate + H(+). Its function is as follows. Nucleoside triphosphate pyrophosphatase that hydrolyzes 7-methyl-GTP (m(7)GTP). May have a dual role in cell division arrest and in preventing the incorporation of modified nucleotides into cellular nucleic acids. In Rhizobium johnstonii (strain DSM 114642 / LMG 32736 / 3841) (Rhizobium leguminosarum bv. viciae), this protein is 7-methyl-GTP pyrophosphatase.